An 87-amino-acid polypeptide reads, in one-letter code: Large ribosomal subunit protein bL27 (87 aa).

The protein belongs to the bacterial ribosomal protein bL27 family.

The protein is Large ribosomal subunit protein bL27 of Paenarthrobacter aurescens (strain TC1).